The following is a 213-amino-acid chain: Redox-sensing transcriptional repressor Rex (213 aa).

The H-T-H motif DNA-binding region spans 16–55 (VYSRFLERMDRNGIVTVSSGEIAEGVGVSSAQVRKDLAYF). Position 90–95 (90–95 (GAGNLG)) interacts with NAD(+).

It belongs to the transcriptional regulatory Rex family. In terms of assembly, homodimer.

Its subcellular location is the cytoplasm. Modulates transcription in response to changes in cellular NADH/NAD(+) redox state. This chain is Redox-sensing transcriptional repressor Rex, found in Pelotomaculum thermopropionicum (strain DSM 13744 / JCM 10971 / SI).